A 618-amino-acid polypeptide reads, in one-letter code: MNRQQLEGRIDIAPRTPGVYLMKDAAGKILYVGKAKNLKSRTRAYFSGTDSRAMIPFLVSRIHDIEFILTETEKEALILENNLIKEHHPRYNICFRDDKAYFNIRADLNEPFPRFQLVRRPRKDGAKYFGPYPSSASARETLQFLQSIFPLRTCRDAELKSRTRPCLEYQIKRCLAPCVGRINSEDYLQMVRDGVSFLEGRGNNLLRELRERMKMAAEQMNYEEAAFLRDRIRAIEETLERQRMVSMTFKDQDIFGLYREGHLIQVCILLIRQGKILGSRLLPLLKFEGETADMLSSLLMQYYDQSVDIPQEILIPASIEDRQVIREWLEEKRGKGLSILIPRKGRGLELLHIAEQNAEHGFKMERKSLDDSDESLRLLMERLHLRRFPRKIEAFDISNIGGRLAVAAMVTFQDGRPLKSGYRRFRIRTVHGADDYAMMYEALKRRYQGKENLPDLIVVDGGKGQLAVAFSLLKDLSISGQDVIGLAKERVNGVTVQGGVNKSEDRVYLPHKKEALYLSRWPAVLFLLQRIRDEAHRFAVSYHRSLKTRSDFMSLLDDIPGVGEVRKKALLLSFGDLARIREATVEELTQVEGIGKDLGEKIHAFLHNDQRSVEPSTG.

Residues 15 to 93 (RTPGVYLMKD…IKEHHPRYNI (79 aa)) enclose the GIY-YIG domain. Positions 203 to 238 (NNLLRELRERMKMAAEQMNYEEAAFLRDRIRAIEET) constitute a UVR domain.

The protein belongs to the UvrC family. As to quaternary structure, interacts with UvrB in an incision complex.

The protein localises to the cytoplasm. Functionally, the UvrABC repair system catalyzes the recognition and processing of DNA lesions. UvrC both incises the 5' and 3' sides of the lesion. The N-terminal half is responsible for the 3' incision and the C-terminal half is responsible for the 5' incision. The polypeptide is UvrABC system protein C (Syntrophus aciditrophicus (strain SB)).